Consider the following 703-residue polypeptide: Glycogen [starch] synthase, liver (703 aa).

Serine 8 carries the post-translational modification Phosphoserine; by PKA. Serine 11 bears the Phosphoserine mark. Lysine 40 contacts UDP. UDP-alpha-D-glucose-binding residues include histidine 205 and arginine 211. Alpha-D-glucose 6-phosphate is bound by residues histidine 291, glutamate 292, glutamine 294, histidine 297, and lysine 301. A UDP-binding site is contributed by arginine 331. Arginine 331 contributes to the UDP-alpha-D-glucose binding site. An alpha-D-glucose 6-phosphate-binding site is contributed by histidine 501. Residues glutamate 510, tryptophan 512, and glycine 513 each contribute to the UDP-alpha-D-glucose site. Threonine 515 is a UDP binding site. Positions 582 and 586 each coordinate alpha-D-glucose 6-phosphate. The residue at position 627 (serine 627) is a Phosphoserine. The tract at residues 628 to 703 (PPTTEGFKYP…KKKLHGEYKN (76 aa)) is disordered. 4 positions are modified to phosphoserine; by GSK3-alpha and GSK3-beta: serine 641, serine 645, serine 649, and serine 653. Residues 647 to 657 (SGSQASSPQSS) are compositionally biased toward low complexity. A Phosphoserine; by CK2 modification is found at serine 657. The span at 658 to 674 (DVEDEVEDERYDEEEEA) shows a compositional bias: acidic residues. Serine 683 is modified (phosphoserine).

The protein belongs to the glycosyltransferase 3 family. As to quaternary structure, part of the glycogen synthase (GS)-glycogenin complex, a heterooctamer composed of a tetramer of GS and 2 dimers of glycogenin, where each GS protomer binds to one glycogenin subunit (via glycogenin C-terminus); the GS tetramer may dissociate from glycogenin dimers to continue glycogen polymerization on its own. May also form a heterooctamer complex with GYG1 (via GYG1 C-terminus). Primed phosphorylation at Ser-657 (site 5) by CSNK2A1 and CSNK2A2 is required for inhibitory phosphorylation at Ser-641 (site 3a), Ser-645 (site 3b), Ser-649 (site 3c) and Ser-653 (site 4) by GSK3A an GSK3B. Dephosphorylation at Ser-641 and Ser-645 by PP1 activates the enzyme. Phosphorylation at Ser-8 is not required for interaction with GYG1. Interaction with GYG1 does not regulate the phosphorylation at Ser-8 and Ser-641. Specifically expressed in liver (at protein level).

It carries out the reaction [(1-&gt;4)-alpha-D-glucosyl](n) + UDP-alpha-D-glucose = [(1-&gt;4)-alpha-D-glucosyl](n+1) + UDP + H(+). It functions in the pathway glycan biosynthesis; glycogen biosynthesis. Its activity is regulated as follows. Allosteric activation by glucose-6-phosphate. Phosphorylation reduces the activity towards UDP-glucose. When in the non-phosphorylated state, glycogen synthase does not require glucose-6-phosphate as an allosteric activator; when phosphorylated it does. Glycogen synthase participates in the glycogen biosynthetic process along with glycogenin and glycogen branching enzyme. Extends the primer composed of a few glucose units formed by glycogenin by adding new glucose units to it. In this context, glycogen synthase transfers the glycosyl residue from UDP-Glc to the non-reducing end of alpha-1,4-glucan. The chain is Glycogen [starch] synthase, liver from Homo sapiens (Human).